Here is a 242-residue protein sequence, read N- to C-terminus: Large ribosomal subunit protein uL1 (242 aa).

The protein belongs to the universal ribosomal protein uL1 family. As to quaternary structure, part of the 50S ribosomal subunit.

In terms of biological role, binds directly to 23S rRNA. The L1 stalk is quite mobile in the ribosome, and is involved in E site tRNA release. Its function is as follows. Protein L1 is also a translational repressor protein, it controls the translation of the L11 operon by binding to its mRNA. This chain is Large ribosomal subunit protein uL1, found in Kitasatospora aureofaciens (Streptomyces aureofaciens).